Consider the following 269-residue polypeptide: GTP cyclohydrolase FolE2 (269 aa).

The protein belongs to the GTP cyclohydrolase IV family.

It carries out the reaction GTP + H2O = 7,8-dihydroneopterin 3'-triphosphate + formate + H(+). Its pathway is cofactor biosynthesis; 7,8-dihydroneopterin triphosphate biosynthesis; 7,8-dihydroneopterin triphosphate from GTP: step 1/1. Its function is as follows. Converts GTP to 7,8-dihydroneopterin triphosphate. The sequence is that of GTP cyclohydrolase FolE2 from Thiobacillus denitrificans (strain ATCC 25259 / T1).